Reading from the N-terminus, the 343-residue chain is MAGNCSWEAHSTNQNKMCPGMSEALELYSRGFLTIEQIATLPPPAVTNYIFLLLCLCGLVGNGLVLWFFGFSIKRTPFSIYFLHLASADGIYLFSKAVIALLNMGTFLGSFPDYVRRVSRIVGLCTFFAGVSLLPAISIERCVSVIFPMWYWRRRPKRLSAGVCALLWLLSFLVTSIHNYFCMFLGHEASGTACLNMDISLGILLFFLFCPLMVLPCLALILHVECRARRRQRSAKLNHVVLAIVSVFLVSSIYLGIDWFLFWVFQIPAPFPEYVTDLCICINSSAKPIVYFLAGRDKSQRLWEPLRVVFQRALRDGAEPGDAASSTPNTVTMEMQCPSGNAS.

At 1–44 (MAGNCSWEAHSTNQNKMCPGMSEALELYSRGFLTIEQIATLPPP) the chain is on the extracellular side. Residue N4 is glycosylated (N-linked (GlcNAc...) asparagine). A helical transmembrane segment spans residues 45–66 (AVTNYIFLLLCLCGLVGNGLVL). Residues 67 to 82 (WFFGFSIKRTPFSIYF) are Cytoplasmic-facing. A helical transmembrane segment spans residues 83 to 104 (LHLASADGIYLFSKAVIALLNM). Residues 105 to 123 (GTFLGSFPDYVRRVSRIVG) lie on the Extracellular side of the membrane. A helical membrane pass occupies residues 124–144 (LCTFFAGVSLLPAISIERCVS). At 145-160 (VIFPMWYWRRRPKRLS) the chain is on the cytoplasmic side. A helical transmembrane segment spans residues 161-181 (AGVCALLWLLSFLVTSIHNYF). Residues 182-198 (CMFLGHEASGTACLNMD) lie on the Extracellular side of the membrane. A helical transmembrane segment spans residues 199 to 220 (ISLGILLFFLFCPLMVLPCLAL). Residues 221–241 (ILHVECRARRRQRSAKLNHVV) lie on the Cytoplasmic side of the membrane. A helical transmembrane segment spans residues 242–263 (LAIVSVFLVSSIYLGIDWFLFW). Topologically, residues 264-273 (VFQIPAPFPE) are extracellular. A helical membrane pass occupies residues 274–294 (YVTDLCICINSSAKPIVYFLA). The Cytoplasmic portion of the chain corresponds to 295–343 (GRDKSQRLWEPLRVVFQRALRDGAEPGDAASSTPNTVTMEMQCPSGNAS). Positions 318-343 (AEPGDAASSTPNTVTMEMQCPSGNAS) are disordered. A compositionally biased stretch (polar residues) spans 324–343 (ASSTPNTVTMEMQCPSGNAS).

The protein belongs to the G-protein coupled receptor 1 family. Mas subfamily. As to expression, gut, vas deferens, uterus and aorta; barely detectable in liver, kidney, lung, and salivary gland. In the brain, markedly abundant in the cerebellum.

It localises to the cell membrane. Functionally, orphan receptor. May bind to a neuropeptide and may regulate nociceptor function and/or development, including the sensation or modulation of pain. This chain is Mas-related G-protein coupled receptor member F (Mrgprf), found in Rattus norvegicus (Rat).